Reading from the N-terminus, the 524-residue chain is Bifunctional purine biosynthesis protein PurH (524 aa).

Residues 1–144 (MVRRALVSVS…KNAAHVGVVV (144 aa)) enclose the MGS-like domain.

Belongs to the PurH family.

It catalyses the reaction (6R)-10-formyltetrahydrofolate + 5-amino-1-(5-phospho-beta-D-ribosyl)imidazole-4-carboxamide = 5-formamido-1-(5-phospho-D-ribosyl)imidazole-4-carboxamide + (6S)-5,6,7,8-tetrahydrofolate. The enzyme catalyses IMP + H2O = 5-formamido-1-(5-phospho-D-ribosyl)imidazole-4-carboxamide. It participates in purine metabolism; IMP biosynthesis via de novo pathway; 5-formamido-1-(5-phospho-D-ribosyl)imidazole-4-carboxamide from 5-amino-1-(5-phospho-D-ribosyl)imidazole-4-carboxamide (10-formyl THF route): step 1/1. Its pathway is purine metabolism; IMP biosynthesis via de novo pathway; IMP from 5-formamido-1-(5-phospho-D-ribosyl)imidazole-4-carboxamide: step 1/1. The protein is Bifunctional purine biosynthesis protein PurH of Anaeromyxobacter sp. (strain Fw109-5).